The chain runs to 316 residues: Retron Ec73 putative ribosyltransferase/DNA-binding protein (316 aa).

In terms of biological role, possible ribosyltransferase/DNA-binding component of antiviral defense system retron Ec73, composed of a non-coding RNA (ncRNA) followed by this protein then a reverse transcriptase (RT). Expression of this retron confers protection against bacteriophages SECphi4, SECphi6, SECphi27 and P1. At multiplicity of infection (MOI) of 0.02 cultures grow normally when infected with SECphi4 without collapsing, at MOI 2 cultures enter growth stasis. The protein is Retron Ec73 putative ribosyltransferase/DNA-binding protein of Escherichia coli.